The chain runs to 135 residues: Large ribosomal subunit protein uL22 (135 aa).

It belongs to the universal ribosomal protein uL22 family. As to quaternary structure, part of the 50S ribosomal subunit.

In terms of biological role, this protein binds specifically to 23S rRNA; its binding is stimulated by other ribosomal proteins, e.g. L4, L17, and L20. It is important during the early stages of 50S assembly. It makes multiple contacts with different domains of the 23S rRNA in the assembled 50S subunit and ribosome. The globular domain of the protein is located near the polypeptide exit tunnel on the outside of the subunit, while an extended beta-hairpin is found that lines the wall of the exit tunnel in the center of the 70S ribosome. In Christiangramia forsetii (strain DSM 17595 / CGMCC 1.15422 / KT0803) (Gramella forsetii), this protein is Large ribosomal subunit protein uL22.